Reading from the N-terminus, the 225-residue chain is NAD(P)H-quinone oxidoreductase subunit K, chloroplastic (225 aa).

Positions 43, 44, 108, and 139 each coordinate [4Fe-4S] cluster.

Belongs to the complex I 20 kDa subunit family. NDH is composed of at least 16 different subunits, 5 of which are encoded in the nucleus. [4Fe-4S] cluster is required as a cofactor.

The protein localises to the plastid. It localises to the chloroplast thylakoid membrane. The enzyme catalyses a plastoquinone + NADH + (n+1) H(+)(in) = a plastoquinol + NAD(+) + n H(+)(out). The catalysed reaction is a plastoquinone + NADPH + (n+1) H(+)(in) = a plastoquinol + NADP(+) + n H(+)(out). Functionally, NDH shuttles electrons from NAD(P)H:plastoquinone, via FMN and iron-sulfur (Fe-S) centers, to quinones in the photosynthetic chain and possibly in a chloroplast respiratory chain. The immediate electron acceptor for the enzyme in this species is believed to be plastoquinone. Couples the redox reaction to proton translocation, and thus conserves the redox energy in a proton gradient. This is NAD(P)H-quinone oxidoreductase subunit K, chloroplastic from Manihot esculenta (Cassava).